Reading from the N-terminus, the 307-residue chain is Putative serpin A13 (307 aa).

The N-terminal stretch at 1–21 is a signal peptide; it reads MEASRWWLLVTVLMAGAHCVA. Residues Asn150 and Asn250 are each glycosylated (N-linked (GlcNAc...) asparagine).

Belongs to the serpin family.

It is found in the secreted. In Homo sapiens (Human), this protein is Putative serpin A13 (SERPINA13P).